Consider the following 134-residue polypeptide: Large ribosomal subunit protein uL16c (134 aa).

This sequence belongs to the universal ribosomal protein uL16 family. As to quaternary structure, part of the 50S ribosomal subunit.

It localises to the plastid. Its subcellular location is the chloroplast. This Gnetum parvifolium (Small-leaved jointfir) protein is Large ribosomal subunit protein uL16c.